A 111-amino-acid polypeptide reads, in one-letter code: ATP-dependent Clp protease adapter protein ClpS (111 aa).

Belongs to the ClpS family. Binds to the N-terminal domain of the chaperone ClpA.

In terms of biological role, involved in the modulation of the specificity of the ClpAP-mediated ATP-dependent protein degradation. This Leptospira interrogans serogroup Icterohaemorrhagiae serovar copenhageni (strain Fiocruz L1-130) protein is ATP-dependent Clp protease adapter protein ClpS.